Reading from the N-terminus, the 114-residue chain is Somatostatin-1A (114 aa).

The signal sequence occupies residues 1 to 24 (MLSTRIQCALALLSLALAVCSVSA). Positions 25–88 (APTDAKLRQL…KDEVRLELER (64 aa)) are excised as a propeptide. Cysteines 103 and 114 form a disulfide.

Belongs to the somatostatin family.

It is found in the secreted. Its function is as follows. Somatostatin inhibits the release of somatotropin. The sequence is that of Somatostatin-1A (sst1a) from Carassius auratus (Goldfish).